The primary structure comprises 215 residues: Probable phosphoglycerate mutase GpmB (215 aa).

Residues 8–15, 21–22, R58, K60, 82–85, 104–105, and 151–152 each bind substrate; these read RHGETQWN, QG, ELDM, RR, and GI. H9 (tele-phosphohistidine intermediate) is an active-site residue. E82 (proton donor/acceptor) is an active-site residue.

It belongs to the phosphoglycerate mutase family. GpmB subfamily.

It catalyses the reaction (2R)-2-phosphoglycerate = (2R)-3-phosphoglycerate. Its pathway is carbohydrate degradation; glycolysis; pyruvate from D-glyceraldehyde 3-phosphate: step 3/5. The sequence is that of Probable phosphoglycerate mutase GpmB from Salmonella paratyphi C (strain RKS4594).